The sequence spans 473 residues: FAD-dependent monooxygeanse terM (473 aa).

Positions Met-1–Cys-22 are cleaved as a signal peptide. Residues Glu-34, Gly-48, Arg-107, Asp-303, and Ala-316 each coordinate FAD. A helical membrane pass occupies residues Val-441 to Phe-461.

It belongs to the paxM FAD-dependent monooxygenase family. FAD serves as cofactor.

It localises to the membrane. It functions in the pathway secondary metabolite biosynthesis. Its function is as follows. FAD-dependent monooxygeanse; part of the gene cluster that mediates the biosynthesis of terpendoles, indole-diterpene (IDT) mycotoxins including terpendole I, terpendole K, terpendole C, as well as the kinesin Eg5 inhibitor terpendole E. Terpendoles biosynthesis begins with the synthesis of geranylgeranyl diphosphate (GGPP) by a yet unidentified GGPP synthase. Condensation of indole-3-glycerol phosphate with GGPP by the prenyltransferase terC then forms 3-geranylgeranylindole (3-GGI), followed by epoxidation and cyclization of this intermediate (by the FAD-dependent monooxygeanse terM and the terpene cyclase terB) to form paspaline. The cytochrome monooxygenase terQ then hydroxylates paspalline at C-11 to yield terpendole E. The cytochrome monooxygenase terP converts terpendole E to 13-desoxyterpendole I, and terQ converts 13-desoxyterpendole I into terpendole I. TerF and terK are required for conversion of terpendole I to terpendole C which is further converted to terpendole K. In Tolypocladium album (Soil fungus), this protein is FAD-dependent monooxygeanse terM.